The chain runs to 204 residues: MLTLDIDPYTILVTSFLILAIQKLVTVIGKQKIQLYIWQIYTKYLSHSQSIKQFNLKQKEIKDLTKQQKLISAQDEYAKWTKINRALDKLKLEVQELNETIAGEKTRIDSITKLAITLILTLPIWFLRIFCRKTALLYIRKGILPAYLEWWLALPFFKSGTIGLTCWMFVVNSVLSNLIFLISFPFTQKVERPIKPKNEQKTES.

Residues 1 to 11 (MLTLDIDPYTI) lie on the Lumenal side of the membrane. The helical transmembrane segment at 12 to 31 (LVTSFLILAIQKLVTVIGKQ) threads the bilayer. The Cytoplasmic portion of the chain corresponds to 32–116 (KIQLYIWQIY…RIDSITKLAI (85 aa)). The stretch at 78 to 113 (AKWTKINRALDKLKLEVQELNETIAGEKTRIDSITK) forms a coiled coil. Residues 117-137 (TLILTLPIWFLRIFCRKTALL) traverse the membrane as a helical segment. Topologically, residues 138 to 161 (YIRKGILPAYLEWWLALPFFKSGT) are lumenal. The chain crosses the membrane as a helical span at residues 162–178 (IGLTCWMFVVNSVLSNL). At 179–204 (IFLISFPFTQKVERPIKPKNEQKTES) the chain is on the cytoplasmic side.

It belongs to the WRB/GET1 family. As to quaternary structure, component of the Golgi to ER traffic (GET) complex, which is composed of GET1, GET2 and GET3. Within the complex, GET1 and GET2 form a heterotetramer which is stabilized by phosphatidylinositol binding and which binds to the GET3 homodimer.

Its subcellular location is the endoplasmic reticulum membrane. It is found in the golgi apparatus membrane. Required for the post-translational delivery of tail-anchored (TA) proteins to the endoplasmic reticulum. Together with GET2, acts as a membrane receptor for soluble GET3, which recognizes and selectively binds the transmembrane domain of TA proteins in the cytosol. The GET complex cooperates with the HDEL receptor ERD2 to mediate the ATP-dependent retrieval of resident ER proteins that contain a C-terminal H-D-E-L retention signal from the Golgi to the ER. This chain is Golgi to ER traffic protein 1, found in Lodderomyces elongisporus (strain ATCC 11503 / CBS 2605 / JCM 1781 / NBRC 1676 / NRRL YB-4239) (Yeast).